Consider the following 383-residue polypeptide: Dual-specificity RNA methyltransferase RlmN (383 aa).

Glutamate 95 serves as the catalytic Proton acceptor. Residues 101 to 349 (EETRGTLCVS…TTVRKTRGDD (249 aa)) enclose the Radical SAM core domain. Cysteine 108 and cysteine 354 form a disulfide bridge. [4Fe-4S] cluster is bound by residues cysteine 115, cysteine 119, and cysteine 122. Residues 180–181 (GE), serine 212, 234–236 (SLH), and asparagine 311 each bind S-adenosyl-L-methionine. Cysteine 354 (S-methylcysteine intermediate) is an active-site residue.

The protein belongs to the radical SAM superfamily. RlmN family. Requires [4Fe-4S] cluster as cofactor.

It is found in the cytoplasm. The catalysed reaction is adenosine(2503) in 23S rRNA + 2 reduced [2Fe-2S]-[ferredoxin] + 2 S-adenosyl-L-methionine = 2-methyladenosine(2503) in 23S rRNA + 5'-deoxyadenosine + L-methionine + 2 oxidized [2Fe-2S]-[ferredoxin] + S-adenosyl-L-homocysteine. It carries out the reaction adenosine(37) in tRNA + 2 reduced [2Fe-2S]-[ferredoxin] + 2 S-adenosyl-L-methionine = 2-methyladenosine(37) in tRNA + 5'-deoxyadenosine + L-methionine + 2 oxidized [2Fe-2S]-[ferredoxin] + S-adenosyl-L-homocysteine. Functionally, specifically methylates position 2 of adenine 2503 in 23S rRNA and position 2 of adenine 37 in tRNAs. m2A2503 modification seems to play a crucial role in the proofreading step occurring at the peptidyl transferase center and thus would serve to optimize ribosomal fidelity. In Paraburkholderia xenovorans (strain LB400), this protein is Dual-specificity RNA methyltransferase RlmN.